The sequence spans 531 residues: Peptide chain release factor 3 (531 aa).

The tr-type G domain maps to 10–278; the sequence is RRRRTFAIIS…SLIDWAPAPK (269 aa). GTP is bound by residues 19 to 26, 87 to 91, and 141 to 144; these read SHPDAGKT, DTPGH, and NKYD.

The protein belongs to the TRAFAC class translation factor GTPase superfamily. Classic translation factor GTPase family. PrfC subfamily.

It is found in the cytoplasm. In terms of biological role, increases the formation of ribosomal termination complexes and stimulates activities of RF-1 and RF-2. It binds guanine nucleotides and has strong preference for UGA stop codons. It may interact directly with the ribosome. The stimulation of RF-1 and RF-2 is significantly reduced by GTP and GDP, but not by GMP. The protein is Peptide chain release factor 3 of Neisseria gonorrhoeae (strain NCCP11945).